A 391-amino-acid chain; its full sequence is Digeranylgeranylglycerophospholipid reductase (391 aa).

FAD-binding residues include Gly18, Glu37, Cys48, Ala49, Ala51, Arg98, Ala122, Asp279, Gly291, and Ile292.

This sequence belongs to the geranylgeranyl reductase family. DGGGPL reductase subfamily. The cofactor is FAD.

It catalyses the reaction a 2,3-bis-O-phytanyl-sn-glycerol 1-phospholipid + 8 A = a 2,3-bis-O-(geranylgeranyl)-sn-glycerol 1-phospholipid + 8 AH2. It carries out the reaction 2,3-bis-O-(phytanyl)-sn-glycerol 1-phosphate + 8 A = 2,3-bis-O-(geranylgeranyl)-sn-glycerol 1-phosphate + 8 AH2. The catalysed reaction is CDP-2,3-bis-O-(geranylgeranyl)-sn-glycerol + 8 AH2 = CDP-2,3-bis-O-(phytanyl)-sn-glycerol + 8 A. The enzyme catalyses archaetidylserine + 8 AH2 = 2,3-bis-O-phytanyl-sn-glycero-3-phospho-L-serine + 8 A. It participates in membrane lipid metabolism; glycerophospholipid metabolism. In terms of biological role, is involved in the reduction of 2,3-digeranylgeranylglycerophospholipids (unsaturated archaeols) into 2,3-diphytanylglycerophospholipids (saturated archaeols) in the biosynthesis of archaeal membrane lipids. Catalyzes the formation of archaetidic acid (2,3-di-O-phytanyl-sn-glyceryl phosphate) from 2,3-di-O-geranylgeranylglyceryl phosphate (DGGGP) via the hydrogenation of each double bond of the isoprenoid chains. Is also probably able to reduce double bonds of geranyl groups in CDP-2,3-bis-O-(geranylgeranyl)-sn-glycerol and archaetidylserine, thus acting at various stages in the biosynthesis of archaeal membrane lipids. The polypeptide is Digeranylgeranylglycerophospholipid reductase (Methanocaldococcus jannaschii (strain ATCC 43067 / DSM 2661 / JAL-1 / JCM 10045 / NBRC 100440) (Methanococcus jannaschii)).